A 69-amino-acid polypeptide reads, in one-letter code: Small ribosomal subunit protein bS21 (69 aa).

The protein belongs to the bacterial ribosomal protein bS21 family.

The chain is Small ribosomal subunit protein bS21 (rpsU) from Treponema pallidum (strain Nichols).